A 300-amino-acid chain; its full sequence is Ribosomal RNA small subunit methyltransferase H (300 aa).

S-adenosyl-L-methionine-binding positions include 38–40 (GGH), glutamate 55, isoleucine 85, aspartate 102, and histidine 109.

This sequence belongs to the methyltransferase superfamily. RsmH family.

It is found in the cytoplasm. The catalysed reaction is cytidine(1402) in 16S rRNA + S-adenosyl-L-methionine = N(4)-methylcytidine(1402) in 16S rRNA + S-adenosyl-L-homocysteine + H(+). Functionally, specifically methylates the N4 position of cytidine in position 1402 (C1402) of 16S rRNA. The sequence is that of Ribosomal RNA small subunit methyltransferase H from Brachyspira hyodysenteriae (strain ATCC 49526 / WA1).